The chain runs to 70 residues: Non-histone chromosomal protein H6 (70 aa).

A disordered region spans residues 1–70; it reads MPKRKSATKG…AAGDGAGNAK (70 aa). A compositionally biased stretch (basic residues) spans 30–45; the sequence is AKPKKAAAPKKAVKGK. Basic and acidic residues predominate over residues 46 to 57; that stretch reads KAAENGDAKAEA.

This sequence belongs to the HMGN family.

It localises to the nucleus. It is found in the secreted. Its function is as follows. Non-histone protein that probably binds to the inner side of nucleosomal DNA, altering the association between the DNA and the nucleosome octamer. Oncorhyncin III has antibacterial activity against Gram-positive and Gram-negative bacteria at submicromolar concentrations. The polypeptide is Non-histone chromosomal protein H6 (Oncorhynchus mykiss (Rainbow trout)).